Consider the following 418-residue polypeptide: Torsin-4A-B (418 aa).

The chain crosses the membrane as a helical span at residues cysteine 128–isoleucine 144. Glycine 200 to serine 207 is a binding site for ATP.

The protein belongs to the ClpA/ClpB family. Torsin subfamily.

It is found in the membrane. This is Torsin-4A-B (tor4a-b) from Xenopus laevis (African clawed frog).